Reading from the N-terminus, the 359-residue chain is MAKSPETELPLKAFGWAARDTSGTLSPFHFSRRENGDDDVSVKILYCGVCHSDLHTLKNDWGFTTYPVVPGHEIVGVVTKVGINVKKFRVGDNVGVGVIVESCQTCENCNQDLEQYCPKPVFTYNSPYKGTRTYGGYSDFVVVHQRYVVQFPDNLPLDAGAPLLCAGITVYSPMKYYGMTEPGKHLGVAGLGGLGHVAIKFGKAFGLKVTVISTSPNKETEAIDKLGADSFLVSKDPEKMKAAMGTMDYIIDTISAAHSLMPLLGLLKLNGKLVTVGLPSKPLELSVFPLVAGRKLIGGSNIGGMKETQEMLDFCGKHNITADIELIKMHEINTAMERLHKADVKYRFVIDVANSFSSL.

7 residues coordinate Zn(2+): C50, H72, C103, C106, C109, C117, and C165.

Belongs to the zinc-containing alcohol dehydrogenase family. The cofactor is Zn(2+).

The catalysed reaction is D-mannitol + NAD(+) = D-mannose + NADH + H(+). In terms of biological role, oxidizes mannitol to mannose. Provides the initial step by which translocated mannitol is committed to central metabolism and, by regulating mannitol pool size, is important in regulating salt tolerance at the cellular level. The protein is Probable mannitol dehydrogenase (CAD1) of Medicago sativa (Alfalfa).